A 426-amino-acid polypeptide reads, in one-letter code: Probable auxin efflux carrier component 9 (426 aa).

At Met-1–Glu-6 the chain is on the extracellular side. Residues Val-7 to Ser-27 form a helical membrane-spanning segment. Residues Val-28–Gln-38 lie on the Cytoplasmic side of the membrane. A helical transmembrane segment spans residues Cys-39–Val-59. A (indol-3-yl)acetate-binding site is contributed by Val-51. At Ser-60 to Arg-70 the chain is on the extracellular side. A helical membrane pass occupies residues Leu-71 to Leu-91. At Trp-92 to Trp-114 the chain is on the cytoplasmic side. Residues Val-115–Leu-135 traverse the membrane as a helical segment. (indol-3-yl)acetate-binding residues include Asn-126 and Ile-128. Residues Asn-136 to Asp-145 lie on the Extracellular side of the membrane. Residues Leu-146–Tyr-166 traverse the membrane as a helical segment. (indol-3-yl)acetate is bound at residue Tyr-159. Topologically, residues Glu-167–Ser-286 are cytoplasmic. The disordered stretch occupies residues Arg-232–Glu-258. A helical membrane pass occupies residues Phe-287 to Val-307. At Glu-308–Ser-310 the chain is on the extracellular side. Residues Leu-311–Ala-331 form a helical membrane-spanning segment. Over Arg-332–Ser-347 the chain is Cytoplasmic. The chain crosses the membrane as a helical span at residues Met-348–Met-368. Topologically, residues His-369–Thr-371 are extracellular. Residues Leu-372–Ala-392 form a helical membrane-spanning segment. Val-386 lines the (indol-3-yl)acetate pocket. The Cytoplasmic segment spans residues Glu-393–Gly-405. The chain crosses the membrane as a helical span at residues Val-406–Leu-426.

Belongs to the auxin efflux carrier (TC 2.A.69.1) family. Homodimer. In terms of tissue distribution, expressed in roots, leaves and shoot apex. Expressed in roots, stem bases, stems, leaves and young panicles.

It is found in the membrane. May act as a component of the auxin efflux carrier. The chain is Probable auxin efflux carrier component 9 from Oryza sativa subsp. japonica (Rice).